A 191-amino-acid polypeptide reads, in one-letter code: Protein YceI (191 aa).

Positions 1 to 22 (MKKSLLGLTFASLMFSAGSAVA) are cleaved as a signal peptide.

This sequence belongs to the UPF0312 family. Type 1 subfamily.

Its subcellular location is the periplasm. The polypeptide is Protein YceI (Shigella boydii serotype 4 (strain Sb227)).